The primary structure comprises 348 residues: Signal recognition particle receptor FtsY (348 aa).

Residues 143–150 (GVNGVGKT), 225–229 (DTSGR), and 289–292 (TKMD) contribute to the GTP site.

This sequence belongs to the GTP-binding SRP family. FtsY subfamily. In terms of assembly, part of the signal recognition particle protein translocation system, which is composed of SRP and FtsY.

The protein resides in the cell membrane. Its subcellular location is the cytoplasm. The catalysed reaction is GTP + H2O = GDP + phosphate + H(+). Involved in targeting and insertion of nascent membrane proteins into the cytoplasmic membrane. Acts as a receptor for the complex formed by the signal recognition particle (SRP) and the ribosome-nascent chain (RNC). The chain is Signal recognition particle receptor FtsY from Mycoplasma pneumoniae (strain ATCC 29342 / M129 / Subtype 1) (Mycoplasmoides pneumoniae).